Here is a 639-residue protein sequence, read N- to C-terminus: Probable methyltransferase PMT18 (639 aa).

Over 1 to 19 (MAKENSSHSLAEAKRKRLT) the chain is Cytoplasmic. A helical; Signal-anchor for type II membrane protein membrane pass occupies residues 20-42 (WILCVSGLCILSYVLGSWQTNTV). A disordered region spans residues 41–86 (TVPTSSSEAYSRMGCDETSTTTRAQTTQTQTNPSSDDTSSSLSSSE). The Lumenal segment spans residues 43–639 (PTSSSEAYSR…VKSYWTGPSS (597 aa)). Low complexity predominate over residues 58-85 (TSTTTRAQTTQTQTNPSSDDTSSSLSSS). N-linked (GlcNAc...) asparagine glycosylation is found at N104 and N427.

This sequence belongs to the methyltransferase superfamily.

Its subcellular location is the endoplasmic reticulum membrane. This is Probable methyltransferase PMT18 from Arabidopsis thaliana (Mouse-ear cress).